A 234-amino-acid polypeptide reads, in one-letter code: Fibrillarin-like rRNA/tRNA 2'-O-methyltransferase (234 aa).

S-adenosyl-L-methionine-binding positions include 91 to 92 (TT), 110 to 111 (EF), 137 to 138 (DA), and 157 to 160 (DVAQ).

It belongs to the methyltransferase superfamily. Fibrillarin family. In terms of assembly, interacts with nop5. Component of box C/D small ribonucleoprotein (sRNP) particles that contain rpl7ae, FlpA and nop5, plus a guide RNA.

Its function is as follows. Involved in pre-rRNA and tRNA processing. Utilizes the methyl donor S-adenosyl-L-methionine to catalyze the site-specific 2'-hydroxyl methylation of ribose moieties in rRNA and tRNA. Site specificity is provided by a guide RNA that base pairs with the substrate. Methylation occurs at a characteristic distance from the sequence involved in base pairing with the guide RNA. This is Fibrillarin-like rRNA/tRNA 2'-O-methyltransferase from Pyrobaculum calidifontis (strain DSM 21063 / JCM 11548 / VA1).